A 442-amino-acid chain; its full sequence is Tol-Pal system protein TolB (442 aa).

The N-terminal stretch at 1–26 (MRHRSCFSLFAGLALVFCLAVGTAAA) is a signal peptide.

It belongs to the TolB family. In terms of assembly, the Tol-Pal system is composed of five core proteins: the inner membrane proteins TolA, TolQ and TolR, the periplasmic protein TolB and the outer membrane protein Pal. They form a network linking the inner and outer membranes and the peptidoglycan layer.

The protein resides in the periplasm. Part of the Tol-Pal system, which plays a role in outer membrane invagination during cell division and is important for maintaining outer membrane integrity. The polypeptide is Tol-Pal system protein TolB (Nitratidesulfovibrio vulgaris (strain ATCC 29579 / DSM 644 / CCUG 34227 / NCIMB 8303 / VKM B-1760 / Hildenborough) (Desulfovibrio vulgaris)).